We begin with the raw amino-acid sequence, 238 residues long: Opacity protein opA60 (238 aa).

Residue alanine 1 is a signal peptide.

This sequence belongs to the opacity porin family.

It is found in the cell outer membrane. Its function is as follows. Implicated in a number of adherence functions. OPA proteins are implicated in pathogenesis and are subject to phase variation. The protein is Opacity protein opA60 (opaH) of Neisseria gonorrhoeae.